The primary structure comprises 206 residues: Large ribosomal subunit protein uL4 (206 aa).

A disordered region spans residues 46–77 (GTRAQKDREQVRHSTKKPFKQKGTGNARAGMT).

This sequence belongs to the universal ribosomal protein uL4 family. As to quaternary structure, part of the 50S ribosomal subunit.

Functionally, one of the primary rRNA binding proteins, this protein initially binds near the 5'-end of the 23S rRNA. It is important during the early stages of 50S assembly. It makes multiple contacts with different domains of the 23S rRNA in the assembled 50S subunit and ribosome. Its function is as follows. Forms part of the polypeptide exit tunnel. This chain is Large ribosomal subunit protein uL4, found in Paracidovorax citrulli (strain AAC00-1) (Acidovorax citrulli).